A 221-amino-acid polypeptide reads, in one-letter code: NEP1-interacting protein-like 1 (221 aa).

Transmembrane regions (helical) follow at residues 35 to 55, 69 to 89, and 95 to 115; these read LFTF…GALI, VGAI…LLLW, and GIGC…GRLV. Residues 176 to 218 form an RING-type; atypical zinc finger; it reads CSVCLQDFQVGETVRSLPHCHHMFHLPCIDKWLRRHASCPLCR.

Belongs to the RING-type zinc finger family. NIP subfamily.

The protein localises to the membrane. May be involved in the early steps of the plant defense signaling pathway. The polypeptide is NEP1-interacting protein-like 1 (ATL27) (Arabidopsis thaliana (Mouse-ear cress)).